A 398-amino-acid polypeptide reads, in one-letter code: Acetate kinase (398 aa).

A Mg(2+)-binding site is contributed by Asn-9. An ATP-binding site is contributed by Lys-16. Position 93 (Arg-93) interacts with substrate. Asp-150 serves as the catalytic Proton donor/acceptor. Residues His-209 to Gly-213, Asp-284 to Arg-286, and Gly-329 to His-333 each bind ATP. Glu-382 is a Mg(2+) binding site.

It belongs to the acetokinase family. In terms of assembly, homodimer. It depends on Mg(2+) as a cofactor. Mn(2+) is required as a cofactor.

It is found in the cytoplasm. The catalysed reaction is acetate + ATP = acetyl phosphate + ADP. It functions in the pathway metabolic intermediate biosynthesis; acetyl-CoA biosynthesis; acetyl-CoA from acetate: step 1/2. Functionally, catalyzes the formation of acetyl phosphate from acetate and ATP. Can also catalyze the reverse reaction. This chain is Acetate kinase, found in Rhodopseudomonas palustris (strain TIE-1).